The sequence spans 660 residues: ATPase WRNIP1 (660 aa).

The segment at 17–44 (QVQCPVCQQMMPAAHINSHLDRCLLLHP) adopts a UBZ4-type zinc-finger fold. Positions 20, 23, 31, 35, and 39 each coordinate Zn(2+). Residues 50–191 (PAAGPHRAGE…DDPGHWDADA (142 aa)) form a disordered region. Phosphoserine is present on residues Ser-65 and Ser-75. Residues 76–89 (ESSALKQPATPTAA) show a composition bias toward polar residues. Lys-81 is covalently cross-linked (Glycyl lysine isopeptide (Lys-Gly) (interchain with G-Cter in ubiquitin)). A Phosphothreonine modification is found at Thr-85. Ser-91 and Ser-92 each carry phosphoserine. Positions 92-104 (SEGEGEEGDDGGE) are enriched in acidic residues. Thr-116 carries the post-translational modification Phosphothreonine. A compositionally biased stretch (low complexity) spans 135-155 (ARKGLGKRPAAAAAAGSASPR). A Glycyl lysine isopeptide (Lys-Gly) (interchain with G-Cter in ubiquitin) cross-link involves residue Lys-141. Ser-153 carries the phosphoserine modification. A compositionally biased stretch (acidic residues) spans 159–182 (ETEAQEEEEAGVDGDGDADVDGED). Lys-220 participates in a covalent cross-link: Glycyl lysine isopeptide (Lys-Gly) (interchain with G-Cter in ubiquitin). An ATP-binding site is contributed by 265–271 (PGCGKTT). Glycyl lysine isopeptide (Lys-Gly) (interchain with G-Cter in ubiquitin) cross-links involve residues Lys-296, Lys-305, Lys-311, Lys-317, and Lys-330. Residue Lys-477 forms a Glycyl lysine isopeptide (Lys-Gly) (interchain with G-Cter in SUMO2); alternate linkage. Lys-477 participates in a covalent cross-link: Glycyl lysine isopeptide (Lys-Gly) (interchain with G-Cter in ubiquitin); alternate. Phosphotyrosine occurs at positions 529 and 557. A Glycyl lysine isopeptide (Lys-Gly) (interchain with G-Cter in ubiquitin) cross-link involves residue Lys-622. A Glycyl lysine isopeptide (Lys-Gly) (interchain with G-Cter in ubiquitin); alternate cross-link involves residue Lys-628. The residue at position 628 (Lys-628) is an N6-acetyllysine; alternate. Lys-631 participates in a covalent cross-link: Glycyl lysine isopeptide (Lys-Gly) (interchain with G-Cter in ubiquitin).

The protein belongs to the AAA ATPase family. RarA/MGS1/WRNIP1 subfamily. Forms homooligomers, possibly octamers. Directly interacts with POLD1, POLD2 and POLD4. Interacts with the N-terminal domain of WRN. Interacts (via UBZ4-type zinc finger) with monoubiquitin and polyubiquitin. Interacts with TRIM14 and PPP6C; these interactions positively regulate the RIGI signaling pathway. Sumoylated with SUMO1 and SUMO2/3. Ubiquitously expressed.

It localises to the nucleus. The protein localises to the cytoplasm. The enzyme catalyses ATP + H2O = ADP + phosphate + H(+). Functions as a modulator of initiation or reinitiation events during DNA polymerase delta-mediated DNA synthesis. In the presence of ATP, stimulation of DNA polymerase delta-mediated DNA synthesis is decreased. Also plays a role in the innate immune defense against viruses. Stabilizes the RIGI dsRNA interaction and promotes RIGI 'Lys-63'-linked polyubiquitination. In turn, RIGI transmits the signal through mitochondrial MAVS. This Rattus norvegicus (Rat) protein is ATPase WRNIP1.